The sequence spans 238 residues: Thrombin-like enzyme collinein-1 (238 aa).

Residues 1-229 (VIGGDECNIN…HLDWIQNIIA (229 aa)) form the Peptidase S1 domain. 6 disulfides stabilise this stretch: Cys7/Cys141, Cys28/Cys44, Cys78/Cys236, Cys120/Cys190, Cys152/Cys169, and Cys180/Cys205. Catalysis depends on charge relay system residues His43 and Asp88. Residue Ser184 is the Charge relay system of the active site.

Belongs to the peptidase S1 family. Snake venom subfamily. As to quaternary structure, monomer. As to expression, expressed by the venom gland.

The protein resides in the secreted. With respect to regulation, inhibited by Cu(2+) and, to a lesser extent, by Zn(2+) and Ba(2+). Not inhibited by Ca(2+) and Mg(2+). In terms of biological role, thrombin-like snake venom serine protease. Releases fibrinopeptide A and B in the conversion of fibrinogen to fibrin, with preferential activity on the alpha chain of fibrinogen. Also hydrolyzes N-p-toluensulfonyl arginine ester (TAME) and chromogenic artificial substrates of the blood coagulation cascade: S-2222 for factor Xa, S-2302 for kallikrein and S-2238 for thrombin. When tested in vitro, the recombinant protein does not degrade blood clots, suggesting that this toxin lacks fibrinolytic activity. In addition, it moderately inhibits human Kv10.1/KCNH1/EAG1 currents, with a mechanism independent of its enzymatic activity. It selectively blocks Kv10.1/KCNH1/EAG1 in a time and dose-dependent manner (IC(50)=4.2 uM for native protein and IC(50)=2.5 uM for recombinant protein). It may have a preference in interacting with Kv10.1/KCNH1/EAG1 in its closed state, since the inhibitory effect of the toxin is decreased at more depolarized potentials. Corroboratively, it may have possible antitumor applications, since it reduces the viability of human breast cancer cell line MCF-7, which strongly expresses Kv10.1/KCNH1/EAG1, but does not affect the liver carcinoma and the non-tumorigenic epithelial breast cell lines, which weakly express Kv10.1/KCNH1/EAG1. When tested on peripheral blood mononuclear cells (PBMC), the native protein shows mild cytotoxicity, whereas the recombinant protein does not show any cytotoxicity. Native form is not immununogenic, since it does not induce statistically significant antibody production in mice, whereas recombinant form shows an antibody titer slightly higher than the native form. In vivo, subplantar injection in mice paw induces a discreet paw edema. In addition, intraperitoneal injection of the recombinant protein into mice led to fibrinogen depletion, resulting in the blood incoagulability. The sequence is that of Thrombin-like enzyme collinein-1 from Crotalus durissus collilineatus (Brazilian rattlesnake).